Consider the following 380-residue polypeptide: Flap endonuclease 1-A (380 aa).

The N-domain stretch occupies residues 1–105 (MGIKGLTKLL…EELAKRFSKR (105 aa)). Residue Asp-34 participates in Mg(2+) binding. Arg-71 is a binding site for DNA. Positions 87, 159, 161, 180, and 182 each coordinate Mg(2+). Residues 123-254 (AVEKLSKRTV…QTALKLIRQH (132 aa)) form an I-domain region. Glu-159 provides a ligand contact to DNA. DNA is bound by residues Gly-232 and Asp-234. Residue Asp-234 coordinates Mg(2+). Residues 336–344 (SQGRLESFF) are interaction with PCNA. Residues 351–380 (SAPLKRKETSDKTSKAAAANKKTKAGGKKK) form a disordered region. Positions 355–364 (KRKETSDKTS) are enriched in basic and acidic residues. Over residues 371 to 380 (KKTKAGGKKK) the composition is skewed to basic residues.

It belongs to the XPG/RAD2 endonuclease family. FEN1 subfamily. In terms of assembly, interacts with PCNA. Three molecules of FEN1 bind to one PCNA trimer with each molecule binding to one PCNA monomer. PCNA stimulates the nuclease activity without altering cleavage specificity. Mg(2+) is required as a cofactor. Phosphorylated. Phosphorylation upon DNA damage induces relocalization to the nuclear plasma.

The protein resides in the nucleus. Its subcellular location is the nucleolus. The protein localises to the nucleoplasm. It is found in the mitochondrion. Structure-specific nuclease with 5'-flap endonuclease and 5'-3' exonuclease activities involved in DNA replication and repair. During DNA replication, cleaves the 5'-overhanging flap structure that is generated by displacement synthesis when DNA polymerase encounters the 5'-end of a downstream Okazaki fragment. It enters the flap from the 5'-end and then tracks to cleave the flap base, leaving a nick for ligation. Also involved in the long patch base excision repair (LP-BER) pathway, by cleaving within the apurinic/apyrimidinic (AP) site-terminated flap. Acts as a genome stabilization factor that prevents flaps from equilibrating into structures that lead to duplications and deletions. Also possesses 5'-3' exonuclease activity on nicked or gapped double-stranded DNA, and exhibits RNase H activity. Also involved in replication and repair of rDNA and in repairing mitochondrial DNA. The chain is Flap endonuclease 1-A from Sorghum bicolor (Sorghum).